The sequence spans 626 residues: Endo-1,3(4)-beta-glucanase xgeA (626 aa).

The N-terminal stretch at 1 to 25 is a signal peptide; sequence MSSSLMRRVGSLAASAIIFPGIAHA. Residues 33–286 enclose the GH16 domain; it reads ESWEGEKILN…WAGGVFGDSG (254 aa). An N-linked (GlcNAc...) asparagine glycan is attached at Asn61. Glu142 functions as the Nucleophile in the catalytic mechanism. Catalysis depends on Glu147, which acts as the Proton donor. The span at 477-494 shows a compositional bias: low complexity; the sequence is ASTDAAAATTPAAEPHPS. Residues 477–533 are disordered; the sequence is ASTDAAAATTPAAEPHPSNAETPADSKSSADAVTAQATKTTIAVNTPNPATDSASSV. Positions 495-533 are enriched in polar residues; it reads NAETPADSKSSADAVTAQATKTTIAVNTPNPATDSASSV. A lipid anchor (GPI-anchor amidated glycine) is attached at Gly603. A propeptide spans 604 to 626 (removed in mature form); sequence VGSKVSISASVAIAAFVMLLLVN.

The protein belongs to the glycosyl hydrolase 16 family.

The protein resides in the cell membrane. It carries out the reaction Endohydrolysis of (1-&gt;3)- or (1-&gt;4)-linkages in beta-D-glucans when the glucose residue whose reducing group is involved in the linkage to be hydrolyzed is itself substituted at C-3.. Its function is as follows. Mixed-linked glucanase involved in the degradation of complex natural cellulosic substrates. Active on laminarin. lichenan, soluble carboxymethyl cellulose but not on pustulan. In Emericella nidulans (strain FGSC A4 / ATCC 38163 / CBS 112.46 / NRRL 194 / M139) (Aspergillus nidulans), this protein is Endo-1,3(4)-beta-glucanase xgeA (xgeA).